The chain runs to 239 residues: Fatty acid metabolism regulator protein (239 aa).

In terms of domain architecture, HTH gntR-type spans 6-74 (QSPAGFAEEY…HGKPTKVNNF (69 aa)). The segment at residues 34–53 (ERELSELIGVTRTTLREVLQ) is a DNA-binding region (H-T-H motif).

Homodimer.

The protein resides in the cytoplasm. In terms of biological role, multifunctional regulator of fatty acid metabolism. This is Fatty acid metabolism regulator protein from Klebsiella pneumoniae subsp. pneumoniae (strain ATCC 700721 / MGH 78578).